A 709-amino-acid chain; its full sequence is Elongation factor G (709 aa).

The tr-type G domain occupies 10-295; it reads NQIRNIGIMA…AVVDYLPSPE (286 aa). Residues 19–26, 91–95, and 145–148 each bind GTP; these read AHIDAGKT, DTPGH, and NKMD.

This sequence belongs to the TRAFAC class translation factor GTPase superfamily. Classic translation factor GTPase family. EF-G/EF-2 subfamily.

It localises to the cytoplasm. Its function is as follows. Catalyzes the GTP-dependent ribosomal translocation step during translation elongation. During this step, the ribosome changes from the pre-translocational (PRE) to the post-translocational (POST) state as the newly formed A-site-bound peptidyl-tRNA and P-site-bound deacylated tRNA move to the P and E sites, respectively. Catalyzes the coordinated movement of the two tRNA molecules, the mRNA and conformational changes in the ribosome. In Bifidobacterium adolescentis (strain ATCC 15703 / DSM 20083 / NCTC 11814 / E194a), this protein is Elongation factor G.